We begin with the raw amino-acid sequence, 158 residues long: Ribonuclease H (158 aa).

One can recognise an RNase H type-1 domain in the interval 1–147; sequence MKVTIYTDGA…CDVLATTAAD (147 aa). Asp8, Glu52, Asp74, and Asp139 together coordinate Mg(2+).

The protein belongs to the RNase H family. As to quaternary structure, monomer. Requires Mg(2+) as cofactor.

The protein resides in the cytoplasm. The catalysed reaction is Endonucleolytic cleavage to 5'-phosphomonoester.. Functionally, endonuclease that specifically degrades the RNA of RNA-DNA hybrids. The protein is Ribonuclease H of Lachnoclostridium phytofermentans (strain ATCC 700394 / DSM 18823 / ISDg) (Clostridium phytofermentans).